We begin with the raw amino-acid sequence, 185 residues long: Ribosome-recycling factor (185 aa).

Belongs to the RRF family.

The protein localises to the cytoplasm. Functionally, responsible for the release of ribosomes from messenger RNA at the termination of protein biosynthesis. May increase the efficiency of translation by recycling ribosomes from one round of translation to another. The polypeptide is Ribosome-recycling factor (Lactococcus lactis subsp. lactis (strain IL1403) (Streptococcus lactis)).